The sequence spans 122 residues: Small ribosomal subunit protein uS13 (122 aa).

The segment at 93–122 is disordered; it reads RRSLPVRGQRTHTNARTRKGPAKPIAGKKK.

This sequence belongs to the universal ribosomal protein uS13 family. Part of the 30S ribosomal subunit. Forms a loose heterodimer with protein S19. Forms two bridges to the 50S subunit in the 70S ribosome.

Functionally, located at the top of the head of the 30S subunit, it contacts several helices of the 16S rRNA. In the 70S ribosome it contacts the 23S rRNA (bridge B1a) and protein L5 of the 50S subunit (bridge B1b), connecting the 2 subunits; these bridges are implicated in subunit movement. Contacts the tRNAs in the A and P-sites. This Chelativorans sp. (strain BNC1) protein is Small ribosomal subunit protein uS13.